The chain runs to 67 residues: Beta-defensin 110 (67 aa).

Residues 1-19 (MKIQLFFFILLFWVTILPA) form the signal peptide. 3 disulfide bridges follow: Cys-35-Cys-63, Cys-42-Cys-56, and Cys-46-Cys-64.

Belongs to the beta-defensin family.

The protein resides in the secreted. Has antibacterial activity. The chain is Beta-defensin 110 (DEFB110) from Pan troglodytes (Chimpanzee).